We begin with the raw amino-acid sequence, 198 residues long: Translation machinery-associated protein 22 (198 aa).

In terms of domain architecture, SUI1 spans 100-171; it reads IIIKRSERTK…EIVEMIRQQV (72 aa).

Belongs to the DENR family. As to quaternary structure, interacts with the 40S ribosomal subunit.

Its subcellular location is the cytoplasm. The protein is Translation machinery-associated protein 22 (TMA22) of Cryptococcus neoformans var. neoformans serotype D (strain B-3501A) (Filobasidiella neoformans).